Consider the following 48-residue polypeptide: U1-theraphotoxin-Agm1a (48 aa).

3 disulfides stabilise this stretch: C4–C34, C8–C40, and C22–C45. M44 is modified (methionine sulfoxide; partial).

This sequence belongs to the neurotoxin 12 (Hwtx-2) family. 01 (Ap1a) subfamily. In terms of tissue distribution, expressed by the venom gland.

It localises to the secreted. Its function is as follows. Is toxic to both insects and mammals. Induces reversible paralysis when injected into S.frugiperda larvae. Reduces both the amplitude and frequency of responses from muscle (GF-TTM and GF-DLM) pathways in the D.melanogaster giant fiber circuit, suggesting an action at the neuromuscular junction, which is mediated by glutamatergic receptors. In mice, intracranial injection of 30 ug causes increased urination, myoclonus, hypermotility with circular movements followed by respiratory and generalized seizures resulting in death within 25-35 minutes of injection. The protein is U1-theraphotoxin-Agm1a of Acanthoscurria gomesiana (Tarantula spider).